Here is an 899-residue protein sequence, read N- to C-terminus: Conserved oligomeric Golgi complex subunit 3 (899 aa).

It belongs to the COG3 family. Component of the conserved oligomeric Golgi complex which is composed of eight different subunits and is required for normal Golgi morphology and localization.

The protein resides in the golgi apparatus membrane. Functionally, involved in ER-Golgi transport. In Aedes aegypti (Yellowfever mosquito), this protein is Conserved oligomeric Golgi complex subunit 3.